Here is a 71-residue protein sequence, read N- to C-terminus: uncharacterized protein (71 aa).

The segment covering 1–16 has biased composition (basic residues); the sequence is MAKSQAKKKRGHRLRN. Disordered regions lie at residues 1-39 and 51-71; these read MAKS…RMTK and KNPY…QKAA. Residues 25-35 show a composition bias toward polar residues; it reads RGSTPSFSTHG. Over residues 51-64 the composition is skewed to basic and acidic residues; that stretch reads KNPYDHTAVDDKDF.

This is an uncharacterized protein from Bacillus subtilis (strain 168).